We begin with the raw amino-acid sequence, 276 residues long: Formamidopyrimidine-DNA glycosylase (276 aa).

Pro-2 (schiff-base intermediate with DNA) is an active-site residue. Catalysis depends on Glu-3, which acts as the Proton donor. The active-site Proton donor; for beta-elimination activity is the Lys-58. DNA-binding residues include His-94, Arg-112, and Arg-157. An FPG-type zinc finger spans residues 242-276 (FVYDRAGLPCRVCGTPIKQIVQGQRSTYFCPTCQR). The active-site Proton donor; for delta-elimination activity is Arg-266.

This sequence belongs to the FPG family. In terms of assembly, monomer. The cofactor is Zn(2+).

The catalysed reaction is Hydrolysis of DNA containing ring-opened 7-methylguanine residues, releasing 2,6-diamino-4-hydroxy-5-(N-methyl)formamidopyrimidine.. The enzyme catalyses 2'-deoxyribonucleotide-(2'-deoxyribose 5'-phosphate)-2'-deoxyribonucleotide-DNA = a 3'-end 2'-deoxyribonucleotide-(2,3-dehydro-2,3-deoxyribose 5'-phosphate)-DNA + a 5'-end 5'-phospho-2'-deoxyribonucleoside-DNA + H(+). Functionally, involved in base excision repair of DNA damaged by oxidation or by mutagenic agents. Acts as a DNA glycosylase that recognizes and removes damaged bases. Has a preference for oxidized purines, such as 7,8-dihydro-8-oxoguanine (8-oxoG). Has AP (apurinic/apyrimidinic) lyase activity and introduces nicks in the DNA strand. Cleaves the DNA backbone by beta-delta elimination to generate a single-strand break at the site of the removed base with both 3'- and 5'-phosphates. The chain is Formamidopyrimidine-DNA glycosylase from Paraburkholderia phytofirmans (strain DSM 17436 / LMG 22146 / PsJN) (Burkholderia phytofirmans).